We begin with the raw amino-acid sequence, 1624 residues long: ATP-binding cassette sub-family A member 9 (1624 aa).

A helical membrane pass occupies residues 31–51 (LLEWLFSFLLVLFLYLFFSNL). Residues N120 and N195 are each glycosylated (N-linked (GlcNAc...) asparagine). The next 6 helical transmembrane spans lie at 221–243 (VATD…YVSV), 269–289 (SWGL…ALIV), 300–320 (FVMV…LAFL), 329–349 (FLTG…GFPA), 354–374 (LPAF…TVGM), and 398–418 (LIIA…VLTL). In terms of domain architecture, ABC transporter 1 spans 481–716 (IRIKNLKKEY…WGIGYHLSLH (236 aa)). 517–524 (GHSGAGKT) contributes to the ATP binding site. The helical transmembrane segment at 864 to 884 (LWTILLLFGISFIPQLLEHLF) threads the bilayer. N949 carries an N-linked (GlcNAc...) asparagine glycan. The next 6 membrane-spanning stretches (helical) occupy residues 1026–1046 (TFFW…SSIG), 1065–1085 (AYWF…LLLM), 1108–1128 (ILCS…ISFI), 1136–1156 (SGIW…ATDL), 1163–1183 (GLFF…LFIF), and 1200–1220 (EIVY…LFIL). Residues 1288 to 1521 (LRKEYAGKKK…FGKDYLLEMK (234 aa)) form the ABC transporter 2 domain. 1326-1333 (GHNGAGKS) contributes to the ATP binding site.

This sequence belongs to the ABC transporter superfamily. ABCA family. As to expression, widely expressed with higher expression in heart.

The protein localises to the membrane. In terms of biological role, transporter that may play a role in monocyte differentiation and lipid transport and homeostasis. In Homo sapiens (Human), this protein is ATP-binding cassette sub-family A member 9 (ABCA9).